Reading from the N-terminus, the 396-residue chain is Elongation factor Tu (396 aa).

The region spanning K11–E205 is the tr-type G domain. The G1 stretch occupies residues G20–T27. G20 to T27 contributes to the GTP binding site. T27 contributes to the Mg(2+) binding site. A G2 region spans residues G61–N65. The segment at D82–G85 is G3. Residues D82 to H86 and N137 to D140 contribute to the GTP site. A G4 region spans residues N137–D140. Residues S175 to L177 are G5.

Belongs to the TRAFAC class translation factor GTPase superfamily. Classic translation factor GTPase family. EF-Tu/EF-1A subfamily. Monomer.

The protein localises to the cytoplasm. The enzyme catalyses GTP + H2O = GDP + phosphate + H(+). GTP hydrolase that promotes the GTP-dependent binding of aminoacyl-tRNA to the A-site of ribosomes during protein biosynthesis. The chain is Elongation factor Tu from Lactobacillus gasseri (strain ATCC 33323 / DSM 20243 / BCRC 14619 / CIP 102991 / JCM 1131 / KCTC 3163 / NCIMB 11718 / NCTC 13722 / AM63).